Consider the following 286-residue polypeptide: Aquaporin PIP1-3 (286 aa).

Methionine 1 carries the N-acetylmethionine modification. A disordered region spans residues 1–33 (MEGKEEDVRVGANKFPERQPIGTSAQTDKDYKE). Topologically, residues 1-54 (MEGKEEDVRVGANKFPERQPIGTSAQTDKDYKEPPPAPFFEPGELSSWSFYRAG) are cytoplasmic. The helical transmembrane segment at 55–75 (IAEFIATFLFLYITVLTVMGV) threads the bilayer. Topologically, residues 76–81 (KRAPNM) are extracellular. A helical membrane pass occupies residues 82–102 (CASVGIQGIAWAFGGMIFALV). Over 103-132 (YCTAGISGGHINPAVTFGLFLARKLSLTRA) the chain is Cytoplasmic. Positions 114 to 116 (NPA) match the NPA 1 motif. Residues 133–153 (VFYIVMQCLGAICGAGVVKGF) traverse the membrane as a helical segment. Residues 154 to 174 (QPNPYQTLGGGANTVAHGYTK) are Extracellular-facing. Residues 175 to 195 (GSGLGAEIIGTFVLVYTVFSA) traverse the membrane as a helical segment. Residues 196 to 208 (TDAKRSARDSHVP) lie on the Cytoplasmic side of the membrane. Residues 209–229 (ILAPLPIGFAVFLVHLATIPI) form a helical membrane-spanning segment. Topologically, residues 230 to 256 (TGTGINPARSLGAAIIYNKDHAWDDHW) are extracellular. The short motif at 235-237 (NPA) is the NPA 2 element. A helical transmembrane segment spans residues 257–277 (IFWVGPFIGAALAALYHQLVI). Residues 278-286 (RAIPFKSRS) lie on the Cytoplasmic side of the membrane. Serine 284 carries the phosphoserine modification.

Belongs to the MIP/aquaporin (TC 1.A.8) family. PIP (TC 1.A.8.11) subfamily. In terms of tissue distribution, expressed in roots, above ground, ripening fruit, flower buds, green siliques and senescing leaves.

The protein resides in the cell membrane. Its function is as follows. Water channel required to facilitate the transport of water across cell membrane. Its function is impaired by Hg(2+). The polypeptide is Aquaporin PIP1-3 (PIP1-3) (Arabidopsis thaliana (Mouse-ear cress)).